The chain runs to 310 residues: Haloalkane dehalogenase (310 aa).

Residues 49-295 (VFLCLHGEPT…DAGHFVQEFG (247 aa)) form the AB hydrolase-1 domain. Residue Asp-124 is the Nucleophile of the active site. Chloride-binding residues include Trp-125 and Trp-175. Asp-260 acts as the Proton donor in catalysis. His-289 acts as the Proton acceptor in catalysis.

This sequence belongs to the haloalkane dehalogenase family. Type 1 subfamily. As to quaternary structure, monomer.

The enzyme catalyses 1-haloalkane + H2O = a halide anion + a primary alcohol + H(+). It catalyses the reaction 1,2-dichloroethane + H2O = 2-chloroethanol + chloride + H(+). Its pathway is xenobiotic degradation; 1,2-dichloroethane degradation; glycolate from 1,2-dichloroethane: step 1/4. With respect to regulation, inhibited by thiol reagents such as p-chloromercuribenzoate and iodoacetamide. In terms of biological role, catalyzes hydrolytic cleavage of carbon-halogen bonds in halogenated aliphatic compounds, leading to the formation of the corresponding primary alcohols, halide ions and protons. Has a broad substrate specificity, which includes terminally mono- and di- chlorinated and brominated alkanes (up to C4 only). The highest activity was found with 1,2-dichloroethane, 1,3-dichloropropane, and 1,2-dibromoethane. The protein is Haloalkane dehalogenase (dhlA) of Xanthobacter autotrophicus.